We begin with the raw amino-acid sequence, 276 residues long: Large ribosomal subunit protein uL2 (276 aa).

2 disordered regions span residues 26–45 and 224–276; these read RSTP…GRNC and AMNP…RGQK. The span at 259 to 276 shows a compositional bias: basic residues; that stretch reads RDKKKASSKLIIKRRGQK.

The protein belongs to the universal ribosomal protein uL2 family. In terms of assembly, part of the 50S ribosomal subunit. Forms a bridge to the 30S subunit in the 70S ribosome.

One of the primary rRNA binding proteins. Required for association of the 30S and 50S subunits to form the 70S ribosome, for tRNA binding and peptide bond formation. It has been suggested to have peptidyltransferase activity; this is somewhat controversial. Makes several contacts with the 16S rRNA in the 70S ribosome. This Oleidesulfovibrio alaskensis (strain ATCC BAA-1058 / DSM 17464 / G20) (Desulfovibrio alaskensis) protein is Large ribosomal subunit protein uL2.